A 272-amino-acid polypeptide reads, in one-letter code: Putative protein-disulfide oxidoreductase RP025 (272 aa).

The first 21 residues, 1 to 21 (MRNIFIVLIFLFLSNCSEVKA), serve as a signal peptide directing secretion. One can recognise a Thioredoxin domain in the interval 74 to 263 (DSREQKKPEI…ISKAVDKALD (190 aa)). C116 and C119 are oxidised to a cystine.

Belongs to the thioredoxin family. DsbA subfamily.

Its subcellular location is the periplasm. May be required for disulfide bond formation in some proteins. In Rickettsia prowazekii (strain Madrid E), this protein is Putative protein-disulfide oxidoreductase RP025.